Consider the following 342-residue polypeptide: Thymidylate synthase (342 aa).

Residues R31 and 156–157 (RR) contribute to the dUMP site. C176 serves as the catalytic Nucleophile. DUMP is bound by residues 196–199 (RSGD), N207, and 237–239 (HVY). D199 is a (6R)-5,10-methylene-5,6,7,8-tetrahydrofolate binding site. A341 lines the (6R)-5,10-methylene-5,6,7,8-tetrahydrofolate pocket.

Belongs to the thymidylate synthase family. Bacterial-type ThyA subfamily. In terms of assembly, homodimer.

The protein resides in the cytoplasm. The catalysed reaction is dUMP + (6R)-5,10-methylene-5,6,7,8-tetrahydrofolate = 7,8-dihydrofolate + dTMP. Its pathway is pyrimidine metabolism; dTTP biosynthesis. Its function is as follows. Catalyzes the reductive methylation of 2'-deoxyuridine-5'-monophosphate (dUMP) to 2'-deoxythymidine-5'-monophosphate (dTMP) while utilizing 5,10-methylenetetrahydrofolate (mTHF) as the methyl donor and reductant in the reaction, yielding dihydrofolate (DHF) as a by-product. This enzymatic reaction provides an intracellular de novo source of dTMP, an essential precursor for DNA biosynthesis. This is Thymidylate synthase from Haloferax volcanii (Halobacterium volcanii).